Here is a 358-residue protein sequence, read N- to C-terminus: CCAAT/enhancer-binding protein alpha (358 aa).

The disordered stretch occupies residues 1 to 55; that stretch reads MESADFYEAEPRPPMSSHLQSPPHAPSNAAFGFPRGAGPAPPPAPPAAPEPLGGI. Residues 1–70 form a required to repress E2F1:TFDP1-mediated transcription, to inhibit cell cycle and to induce adipocyte differentiation region; it reads MESADFYEAE…SIDISAYIDP (70 aa). Over residues 29 to 38 the composition is skewed to low complexity; the sequence is AAFGFPRGAG. The span at 39 to 49 shows a compositional bias: pro residues; that stretch reads PAPPPAPPAAP. A required for interaction with TRIB1 region spans residues 54–72; that stretch reads GICEHETSIDISAYIDPAA. The required to induce adipocyte differentiation stretch occupies residues 126 to 200; the sequence is PPGYGCAAAG…HASPAHLAAP (75 aa). Lys159 bears the N6-acetyllysine; alternate mark. Lys159 is covalently cross-linked (Glycyl lysine isopeptide (Lys-Gly) (interchain with G-Cter in SUMO); alternate). Residue Lys159 forms a Glycyl lysine isopeptide (Lys-Gly) (interchain with G-Cter in SUMO2); alternate linkage. Disordered regions lie at residues 176–195 and 213–310; these read LFPY…ASPA and TMHL…NVET. Over residues 179–191 the composition is skewed to pro residues; sequence YQPPPPPPPPHPH. Residues 180 to 194 form a required to functionally cooperate with SREBF1 in promoter activation region; the sequence is QPPPPPPPPHPHASP. Residue Ser193 is modified to Phosphoserine. The segment covering 220-234 has biased composition (pro residues); the sequence is HPTPPPTPVPSPHPA. Thr222 and Thr226 each carry phosphothreonine; by GSK3. At Ser230 the chain carries Phosphoserine; by GSK3. An interaction with FOXO1 region spans residues 240–358; the sequence is AGLPGPGGSL…SLVKAMGNCA (119 aa). Over residues 261 to 271 the composition is skewed to gly residues; that stretch reads TGGGGGGGAGA. The span at 276–292 shows a compositional bias: basic and acidic residues; the sequence is KSVDKNSNEYRVRRERN. The bZIP domain occupies 282-345; the sequence is SNEYRVRRER…DTLRGIFRQL (64 aa). The DNA-binding element occupies 285–300; that stretch reads YRVRRERNNIAVRKSR. The interval 286–313 is basic motif; that stretch reads RVRRERNNIAVRKSRDKAKQRNVETQQK. The tract at residues 317–345 is leucine-zipper; sequence LTSDNDRLRKRVEQLSRELDTLRGIFRQL.

It belongs to the bZIP family. C/EBP subfamily. In terms of assembly, binds DNA as a homodimer and as a heterodimer. Can form stable heterodimers with CEBPB, CEBPD, CEBPE and CEBPG. Can form stable homodimers (also isoform 2 and isoform 3 dimers) and heterodimers with CEBPB (with isoform 2 and isoform 3) and CEBPG. Interacts with PRDM16. Interacts with UBN1. Interacts with ZNF638; this interaction increases transcriptional activation. Interacts with the complex TFDP2:E2F1; the interaction prevents CEBPA binding to target gene promoters and represses its transcriptional activity. Interacts with RB1. Interacts (when phosphorylated at Ser-193) with CDK2, CDK4, E2F4 and SMARCA2. Interacts with SREBPF1. Interacts with FOXO1 (via the Fork-head domain); the interaction increases when FOXO1 is deacetylated. Interacts with SIX1. Interacts (via recognition sequence) with TRIB1. As to quaternary structure, interacts with TAF1A and UBTF. Interacts with NPM1. Post-translationally, sumoylated, sumoylation blocks the inhibitory effect on cell proliferation by disrupting the interaction with SMARCA2. Phosphorylation at Ser-193 is required for interaction with CDK2, CDK4 and SWI/SNF complex leading to cell cycle inhibition. Dephosphorylated at Ser-193 by protein phosphatase 2A (PP2A) through PI3K/AKT signaling pathway regulation. Phosphorylation at Thr-222 and Thr-226 by GSK3 is constitutive in adipose tissue and lung. In liver, both Thr-222 and Thr-226 are phosphorylated only during feeding but not during fasting. Phosphorylation of the GSK3 consensus sites selectively decreases transactivation activity on IRE-controlled promoters. In terms of processing, ubiquitinated by COP1 upon interaction with TRIB1. Isoform 2 and isoform 3 are expressed in liver (at protein level).

It localises to the nucleus. Its subcellular location is the nucleolus. Functionally, transcription factor that coordinates proliferation arrest and the differentiation of myeloid progenitors, adipocytes, hepatocytes, and cells of the lung and the placenta. Binds directly to the consensus DNA sequence 5'-T[TG]NNGNAA[TG]-3' acting as an activator on distinct target genes. During early embryogenesis, plays essential and redundant functions with CEBPB. Essential for the transition from common myeloid progenitors (CMP) to granulocyte/monocyte progenitors (GMP). Critical for the proper development of the liver and the lung. Necessary for terminal adipocyte differentiation, is required for postnatal maintenance of systemic energy homeostasis and lipid storage. To regulate these different processes at the proper moment and tissue, interplays with other transcription factors and modulators. Down-regulates the expression of genes that maintain cells in an undifferentiated and proliferative state through E2F1 repression, which is critical for its ability to induce adipocyte and granulocyte terminal differentiation. Reciprocally E2F1 blocks adipocyte differentiation by binding to specific promoters and repressing CEBPA binding to its target gene promoters. Proliferation arrest also depends on a functional binding to SWI/SNF complex. In liver, regulates gluconeogenesis and lipogenesis through different mechanisms. To regulate gluconeogenesis, functionally cooperates with FOXO1 binding to IRE-controlled promoters and regulating the expression of target genes such as PCK1 or G6PC1. To modulate lipogenesis, interacts and transcriptionally synergizes with SREBF1 in promoter activation of specific lipogenic target genes such as ACAS2. In adipose tissue, seems to act as FOXO1 coactivator accessing to ADIPOQ promoter through FOXO1 binding sites. Its function is as follows. Can act as dominant-negative. Binds DNA and have transctivation activity, even if much less efficiently than isoform 2. Does not inhibit cell proliferation. Directly and specifically enhances ribosomal DNA transcription interacting with RNA polymerase I-specific cofactors and inducing histone acetylation. The sequence is that of CCAAT/enhancer-binding protein alpha from Rattus norvegicus (Rat).